A 76-amino-acid chain; its full sequence is MPKRILNGVVTSDANAQTVTVSVERRFTHPVLKKTIRKSKKYRAHDAENAFKVGDKVRIQECAPMSKTKRWEVIAN.

It belongs to the universal ribosomal protein uS17 family. Part of the 30S ribosomal subunit.

Its function is as follows. One of the primary rRNA binding proteins, it binds specifically to the 5'-end of 16S ribosomal RNA. The polypeptide is Small ribosomal subunit protein uS17 (Dinoroseobacter shibae (strain DSM 16493 / NCIMB 14021 / DFL 12)).